We begin with the raw amino-acid sequence, 91 residues long: Ribonuclease P protein component 4 (91 aa).

Zn(2+) contacts are provided by C55, C58, C78, and C81.

It belongs to the eukaryotic/archaeal RNase P protein component 4 family. In terms of assembly, consists of a catalytic RNA component and at least 4-5 protein subunits. Zn(2+) serves as cofactor.

It is found in the cytoplasm. The catalysed reaction is Endonucleolytic cleavage of RNA, removing 5'-extranucleotides from tRNA precursor.. Its function is as follows. Part of ribonuclease P, a protein complex that generates mature tRNA molecules by cleaving their 5'-ends. The sequence is that of Ribonuclease P protein component 4 from Thermoplasma acidophilum (strain ATCC 25905 / DSM 1728 / JCM 9062 / NBRC 15155 / AMRC-C165).